A 151-amino-acid polypeptide reads, in one-letter code: Large ribosomal subunit protein uL13 (151 aa).

It belongs to the universal ribosomal protein uL13 family. As to quaternary structure, part of the 50S ribosomal subunit.

Its function is as follows. This protein is one of the early assembly proteins of the 50S ribosomal subunit, although it is not seen to bind rRNA by itself. It is important during the early stages of 50S assembly. The chain is Large ribosomal subunit protein uL13 from Microchaete diplosiphon (Fremyella diplosiphon).